Consider the following 255-residue polypeptide: Small ribosomal subunit protein uS2 (255 aa).

The segment at 230 to 255 is disordered; that stretch reads QGSSGRDLGASSEVPVEPALEEAAEG.

This sequence belongs to the universal ribosomal protein uS2 family.

The chain is Small ribosomal subunit protein uS2 from Rhizobium johnstonii (strain DSM 114642 / LMG 32736 / 3841) (Rhizobium leguminosarum bv. viciae).